The sequence spans 335 residues: NADH-quinone oxidoreductase subunit H (335 aa).

The next 8 helical transmembrane spans lie at 15–35 (VVKA…LSFV), 81–101 (MIFT…FSII), 114–134 (IGLL…LFAG), 154–174 (VSYE…VGSF), 187–207 (LWFI…GVAV), 238–258 (FFVG…TLFF), 270–290 (QVPF…FILL), and 307–327 (WKFC…IVLY).

It belongs to the complex I subunit 1 family. NDH-1 is composed of 13 different subunits. Subunits NuoA, H, J, K, L, M, N constitute the membrane sector of the complex.

It is found in the cell inner membrane. It catalyses the reaction a quinone + NADH + 5 H(+)(in) = a quinol + NAD(+) + 4 H(+)(out). Its function is as follows. NDH-1 shuttles electrons from NADH, via FMN and iron-sulfur (Fe-S) centers, to quinones in the respiratory chain. The immediate electron acceptor for the enzyme in this species is believed to be ubiquinone. Couples the redox reaction to proton translocation (for every two electrons transferred, four hydrogen ions are translocated across the cytoplasmic membrane), and thus conserves the redox energy in a proton gradient. This subunit may bind ubiquinone. In Pseudomonas putida (strain GB-1), this protein is NADH-quinone oxidoreductase subunit H.